A 342-amino-acid chain; its full sequence is Probable dual-specificity RNA methyltransferase RlmN (342 aa).

Glu-91 (proton acceptor) is an active-site residue. The 231-residue stretch at 97–327 folds into the Radical SAM core domain; that stretch reads YKHGNSICVS…TTIRREMGAD (231 aa). Cys-104 and Cys-332 are disulfide-bonded. Cys-111, Cys-115, and Cys-118 together coordinate [4Fe-4S] cluster. S-adenosyl-L-methionine contacts are provided by residues 158-159, Ser-190, 213-215, and Asn-289; these read GE and SLH. The active-site S-methylcysteine intermediate is Cys-332.

This sequence belongs to the radical SAM superfamily. RlmN family. [4Fe-4S] cluster is required as a cofactor.

The protein localises to the cytoplasm. It carries out the reaction adenosine(2503) in 23S rRNA + 2 reduced [2Fe-2S]-[ferredoxin] + 2 S-adenosyl-L-methionine = 2-methyladenosine(2503) in 23S rRNA + 5'-deoxyadenosine + L-methionine + 2 oxidized [2Fe-2S]-[ferredoxin] + S-adenosyl-L-homocysteine. The enzyme catalyses adenosine(37) in tRNA + 2 reduced [2Fe-2S]-[ferredoxin] + 2 S-adenosyl-L-methionine = 2-methyladenosine(37) in tRNA + 5'-deoxyadenosine + L-methionine + 2 oxidized [2Fe-2S]-[ferredoxin] + S-adenosyl-L-homocysteine. In terms of biological role, specifically methylates position 2 of adenine 2503 in 23S rRNA and position 2 of adenine 37 in tRNAs. In Clostridium botulinum (strain ATCC 19397 / Type A), this protein is Probable dual-specificity RNA methyltransferase RlmN.